Reading from the N-terminus, the 255-residue chain is Thiazole synthase (255 aa).

Residue lysine 95 is the Schiff-base intermediate with DXP of the active site. Residues glycine 156, 182 to 183 (AG), and 204 to 205 (NT) contribute to the 1-deoxy-D-xylulose 5-phosphate site.

This sequence belongs to the ThiG family. As to quaternary structure, homotetramer. Forms heterodimers with either ThiH or ThiS.

Its subcellular location is the cytoplasm. It carries out the reaction [ThiS sulfur-carrier protein]-C-terminal-Gly-aminoethanethioate + 2-iminoacetate + 1-deoxy-D-xylulose 5-phosphate = [ThiS sulfur-carrier protein]-C-terminal Gly-Gly + 2-[(2R,5Z)-2-carboxy-4-methylthiazol-5(2H)-ylidene]ethyl phosphate + 2 H2O + H(+). It participates in cofactor biosynthesis; thiamine diphosphate biosynthesis. Catalyzes the rearrangement of 1-deoxy-D-xylulose 5-phosphate (DXP) to produce the thiazole phosphate moiety of thiamine. Sulfur is provided by the thiocarboxylate moiety of the carrier protein ThiS. In vitro, sulfur can be provided by H(2)S. The protein is Thiazole synthase of Vibrio parahaemolyticus serotype O3:K6 (strain RIMD 2210633).